Reading from the N-terminus, the 822-residue chain is Lysine-specific histone demethylase 2 (822 aa).

Positions 1 to 11 (MATPRGRTKKK) are enriched in basic residues. A disordered region spans residues 1–47 (MATPRGRTKKKASFDHSPDSLPLRSSGRQAKKKATETTDEDEDGGSE). A phosphoserine mark is found at Ser-13, Ser-17, and Ser-26. Zn(2+) is bound by residues Cys-53, Cys-58, Cys-65, Cys-73, His-84, His-90, Cys-92, Cys-95, Cys-142, Cys-147, Cys-169, and Cys-185. Residues 133–193 (DQQLPYWVQC…HCSLPEDLRV (61 aa)) form a CW-type zinc finger. A Phosphoserine modification is found at Ser-247. A GLYR1-binding region spans residues 273-292 (YQPNECGKALCVRPDVMELD). One can recognise an SWIRM domain in the interval 275-373 (PNECGKALCV…TGVLSVGADQ (99 aa)). 383-439 (KSVIIIGAGPAGLAAARQLHNFGIKVTVLEAKDRIGGRVWDDKSFKGVTVGRGAQIV) provides a ligand contact to FAD. 3 histone H3-binding regions span residues 438 to 467 (IVNG…RCDL), 487 to 498 (FNALLDVVSEWR), and 538 to 572 (FHLS…AGDH). Residues 564 to 566 (FFA) form a GLYR1-binding region. Residues Val-598, Glu-795, and 803–805 (QTV) each bind FAD. Positions 798–814 (NRHFPQTVTGAYLSGVR) are GLYR1-binding.

Belongs to the flavin monoamine oxidase family. As to quaternary structure, interacts with its cofactor GLYR1 at nucleosomes; this interaction stimulates H3K4me1 and H3K4me2 demethylation. In contrast to KDM1A, does not form a complex with RCOR1/CoREST. Possible accessory component of the polycomb repressive deubiquitinase (PR-DUB) complex, at least composed of BAP1, one of ASXL1, ASXL2 or (probably) ASXL3 and one of MBD5 or MBD6. The PR-DUB core associates with a number of accessory proteins, including FOXK1, FOXK2, KDM1B, HCFC1 and OGT; KDM1B specifically associates with ASXL2 PR-DUB complexes. The cofactor is FAD. It depends on Zn(2+) as a cofactor.

Its subcellular location is the nucleus. The protein localises to the chromosome. The catalysed reaction is N(6),N(6)-dimethyl-L-lysyl(4)-[histone H3] + 2 A + 2 H2O = L-lysyl(4)-[histone H3] + 2 formaldehyde + 2 AH2. The enzyme catalyses N(6)-methyl-L-lysyl(4)-[histone H3] + A + H2O = L-lysyl(4)-[histone H3] + formaldehyde + AH2. With respect to regulation, histone H3K4me1 and H3K4me2 demethylase activity is inhibited by DNA, this inhibition is released in complex with GLYR1. Its function is as follows. Histone demethylase that demethylates 'Lys-4' of histone H3, a specific tag for epigenetic transcriptional activation, thereby acting as a corepressor. Required for de novo DNA methylation of a subset of imprinted genes during oogenesis. Acts by oxidizing the substrate by FAD to generate the corresponding imine that is subsequently hydrolyzed. Demethylates both mono- and di-methylated 'Lys-4' of histone H3. Has no effect on tri-methylated 'Lys-4', mono-, di- or tri-methylated 'Lys-9', mono-, di- or tri-methylated 'Lys-27', mono-, di- or tri-methylated 'Lys-36' of histone H3, or on mono-, di- or tri-methylated 'Lys-20' of histone H4. Alone, it is unable to demethylate H3K4me on nucleosomes and requires the presence of GLYR1 to achieve such activity, they form a multifunctional enzyme complex that modifies transcribed chromatin and facilitates Pol II transcription through nucleosomes. The protein is Lysine-specific histone demethylase 2 of Homo sapiens (Human).